Here is a 242-residue protein sequence, read N- to C-terminus: uncharacterized protein (242 aa).

The protein localises to the cytoplasm. The protein resides in the nucleus. This is an uncharacterized protein from Schizosaccharomyces pombe (strain 972 / ATCC 24843) (Fission yeast).